The sequence spans 635 residues: BTB/POZ domain-containing protein SETH6 (635 aa).

The region spanning 39-104 is the BTB domain; the sequence is SDLTIEVGSA…CYGVGVQYNS (66 aa). Residues 206-494 form the NPH3 domain; the sequence is DWWGRSLPIL…VQVLFYEQTR (289 aa). Tyrosine 435 is modified (phosphotyrosine). Residues 604–635 are disordered; sequence QSVASSGKKHTEEKTNSERRFMFQKRRCHSVS. Positions 612-624 are enriched in basic and acidic residues; it reads KHTEEKTNSERRF. The segment covering 625 to 635 has biased composition (basic residues); that stretch reads MFQKRRCHSVS.

It belongs to the NPH3 family.

Its pathway is protein modification; protein ubiquitination. Functionally, may act as a substrate-specific adapter of an E3 ubiquitin-protein ligase complex (CUL3-RBX1-BTB) which mediates the ubiquitination and subsequent proteasomal degradation of target proteins. In Arabidopsis thaliana (Mouse-ear cress), this protein is BTB/POZ domain-containing protein SETH6 (SETH6).